Here is a 93-residue protein sequence, read N- to C-terminus: uncharacterized protein (93 aa).

The disordered stretch occupies residues Arg-41–Thr-62. Residues Ile-46–Thr-62 are compositionally biased toward low complexity.

This is an uncharacterized protein from Dictyostelium discoideum (Social amoeba).